We begin with the raw amino-acid sequence, 171 residues long: Large ribosomal subunit protein bL9 (171 aa).

The protein belongs to the bacterial ribosomal protein bL9 family.

Binds to the 23S rRNA. In Rickettsia canadensis (strain McKiel), this protein is Large ribosomal subunit protein bL9.